Reading from the N-terminus, the 396-residue chain is 8-amino-7-oxononanoate synthase (396 aa).

Substrate is bound at residue R19. Pyridoxal 5'-phosphate is bound at residue 106–107 (GY). H131 contacts substrate. Residues S176, H204, and T233 each coordinate pyridoxal 5'-phosphate. K236 is modified (N6-(pyridoxal phosphate)lysine). Residue T350 participates in substrate binding.

The protein belongs to the class-II pyridoxal-phosphate-dependent aminotransferase family. BioF subfamily. As to quaternary structure, homodimer. Requires pyridoxal 5'-phosphate as cofactor.

The catalysed reaction is 6-carboxyhexanoyl-[ACP] + L-alanine + H(+) = (8S)-8-amino-7-oxononanoate + holo-[ACP] + CO2. It participates in cofactor biosynthesis; biotin biosynthesis. Catalyzes the decarboxylative condensation of pimeloyl-[acyl-carrier protein] and L-alanine to produce 8-amino-7-oxononanoate (AON), [acyl-carrier protein], and carbon dioxide. This Pseudomonas syringae pv. tomato (strain ATCC BAA-871 / DC3000) protein is 8-amino-7-oxononanoate synthase.